The chain runs to 157 residues: 2-C-methyl-D-erythritol 2,4-cyclodiphosphate synthase (157 aa).

2 residues coordinate a divalent metal cation: Asp9 and His11. Residues 9 to 11 (DVH) and 35 to 36 (HS) contribute to the 4-CDP-2-C-methyl-D-erythritol 2-phosphate site. A divalent metal cation is bound at residue His43. 4-CDP-2-C-methyl-D-erythritol 2-phosphate contacts are provided by residues 57 to 59 (DIG), Phe140, and Arg143.

This sequence belongs to the IspF family. As to quaternary structure, homotrimer. It depends on a divalent metal cation as a cofactor.

The enzyme catalyses 4-CDP-2-C-methyl-D-erythritol 2-phosphate = 2-C-methyl-D-erythritol 2,4-cyclic diphosphate + CMP. It functions in the pathway isoprenoid biosynthesis; isopentenyl diphosphate biosynthesis via DXP pathway; isopentenyl diphosphate from 1-deoxy-D-xylulose 5-phosphate: step 4/6. In terms of biological role, involved in the biosynthesis of isopentenyl diphosphate (IPP) and dimethylallyl diphosphate (DMAPP), two major building blocks of isoprenoid compounds. Catalyzes the conversion of 4-diphosphocytidyl-2-C-methyl-D-erythritol 2-phosphate (CDP-ME2P) to 2-C-methyl-D-erythritol 2,4-cyclodiphosphate (ME-CPP) with a corresponding release of cytidine 5-monophosphate (CMP). The sequence is that of 2-C-methyl-D-erythritol 2,4-cyclodiphosphate synthase from Caldicellulosiruptor bescii (strain ATCC BAA-1888 / DSM 6725 / KCTC 15123 / Z-1320) (Anaerocellum thermophilum).